The following is a 422-amino-acid chain: 2-(3-amino-3-carboxypropyl)histidine synthase subunit 1 (422 aa).

[4Fe-4S] cluster contacts are provided by Cys-128, Cys-234, and Cys-363.

The protein belongs to the DPH1/DPH2 family. DPH1 subfamily. Component of the 2-(3-amino-3-carboxypropyl)histidine synthase complex composed of DPH1, DPH2, DPH3 and a NADH-dependent reductase, predominantly CBR1. [4Fe-4S] cluster is required as a cofactor.

The protein localises to the cytoplasm. The catalysed reaction is L-histidyl-[translation elongation factor 2] + S-adenosyl-L-methionine = 2-[(3S)-amino-3-carboxypropyl]-L-histidyl-[translation elongation factor 2] + S-methyl-5'-thioadenosine + H(+). The protein operates within protein modification; peptidyl-diphthamide biosynthesis. In terms of biological role, catalyzes the first step of diphthamide biosynthesis, a post-translational modification of histidine which occurs in elongation factor 2. DPH1 and DPH2 transfer a 3-amino-3-carboxypropyl (ACP) group from S-adenosyl-L-methionine (SAM) to a histidine residue, the reaction is assisted by a reduction system comprising DPH3 and a NADH-dependent reductase, predominantly CBR1. In Kluyveromyces lactis (strain ATCC 8585 / CBS 2359 / DSM 70799 / NBRC 1267 / NRRL Y-1140 / WM37) (Yeast), this protein is 2-(3-amino-3-carboxypropyl)histidine synthase subunit 1 (DPH1).